The primary structure comprises 111 residues: uncharacterized protein (111 aa).

The disordered stretch occupies residues 43–72 (NGRAEETEADAPLPEEPSLPDLPDLSDLDS). The span at 61-72 (LPDLPDLSDLDS) shows a compositional bias: low complexity.

This is an uncharacterized protein from Homo sapiens (Human).